The following is a 538-amino-acid chain: Putative outer membrane porin BglH (538 aa).

The first 25 residues, 1–25 (MFRRNLITSAILLMAPLAFSAQSLA), serve as a signal peptide directing secretion. Residues 52–82 (KDEEKKKYTPATVNRSVSTNDQGYAANPFPT) form a disordered region. Positions 62–73 (ATVNRSVSTNDQ) are enriched in polar residues.

It belongs to the porin LamB (TC 1.B.3) family.

It localises to the cell outer membrane. Functionally, may be a sugar porin with a broad carbohydrate specificity. The protein is Putative outer membrane porin BglH (bglH) of Escherichia coli O139:H28 (strain E24377A / ETEC).